Consider the following 581-residue polypeptide: Proline--tRNA ligase (581 aa).

It belongs to the class-II aminoacyl-tRNA synthetase family. ProS type 1 subfamily. Homodimer.

It is found in the cytoplasm. It carries out the reaction tRNA(Pro) + L-proline + ATP = L-prolyl-tRNA(Pro) + AMP + diphosphate. In terms of biological role, catalyzes the attachment of proline to tRNA(Pro) in a two-step reaction: proline is first activated by ATP to form Pro-AMP and then transferred to the acceptor end of tRNA(Pro). As ProRS can inadvertently accommodate and process non-cognate amino acids such as alanine and cysteine, to avoid such errors it has two additional distinct editing activities against alanine. One activity is designated as 'pretransfer' editing and involves the tRNA(Pro)-independent hydrolysis of activated Ala-AMP. The other activity is designated 'posttransfer' editing and involves deacylation of mischarged Ala-tRNA(Pro). The misacylated Cys-tRNA(Pro) is not edited by ProRS. The sequence is that of Proline--tRNA ligase from Chlamydia trachomatis serovar A (strain ATCC VR-571B / DSM 19440 / HAR-13).